A 122-amino-acid chain; its full sequence is Double-headed protease inhibitor, submandibular gland (122 aa).

2 Kazal-like domains span residues 10–70 (GGRK…ECDI) and 71–121 (ECTQ…QCQS). 6 disulfides stabilise this stretch: Cys-16–Cys-50, Cys-28–Cys-47, Cys-36–Cys-68, Cys-72–Cys-101, Cys-79–Cys-98, and Cys-87–Cys-119.

Its subcellular location is the secreted. This inhibitor is composed of two homologous actively inhibiting halves: one which inhibits trypsin, the other which inhibits elastase. The sequence is that of Double-headed protease inhibitor, submandibular gland from Panthera uncia (Snow leopard).